The following is a 419-amino-acid chain: UDP-N-acetylglucosamine 1-carboxyvinyltransferase 2 (419 aa).

22-23 (KN) lines the phosphoenolpyruvate pocket. Arginine 92 provides a ligand contact to UDP-N-acetyl-alpha-D-glucosamine. Cysteine 116 acts as the Proton donor in catalysis. A 2-(S-cysteinyl)pyruvic acid O-phosphothioketal modification is found at cysteine 116. UDP-N-acetyl-alpha-D-glucosamine is bound by residues 121–125 (RPIDL), aspartate 306, and isoleucine 328.

The protein belongs to the EPSP synthase family. MurA subfamily.

It localises to the cytoplasm. It catalyses the reaction phosphoenolpyruvate + UDP-N-acetyl-alpha-D-glucosamine = UDP-N-acetyl-3-O-(1-carboxyvinyl)-alpha-D-glucosamine + phosphate. Its pathway is cell wall biogenesis; peptidoglycan biosynthesis. In terms of biological role, cell wall formation. Adds enolpyruvyl to UDP-N-acetylglucosamine. The sequence is that of UDP-N-acetylglucosamine 1-carboxyvinyltransferase 2 from Streptococcus pneumoniae (strain ATCC BAA-255 / R6).